Reading from the N-terminus, the 551-residue chain is Solute carrier family 22 member 27 (551 aa).

At 1–15 (MSFQELLNQVGSLGR) the chain is on the cytoplasmic side. Residues 16-36 (FQILQIVFLLLLNAIVVPHIA) form a helical membrane-spanning segment. Topologically, residues 37–145 (MENFTAAIPN…DLVCESQALN (109 aa)) are extracellular. N-linked (GlcNAc...) asparagine glycosylation is found at asparagine 39, asparagine 56, asparagine 62, asparagine 102, and asparagine 107. A helical membrane pass occupies residues 146–166 (SVTKFSFMIGLFIGGIICGHL). At 167–173 (SDRLGRK) the chain is on the cytoplasmic side. The helical transmembrane segment at 174-194 (FILTCALLQFAITETCVAFAP) threads the bilayer. Residues 195 to 203 (SFFIYCSLR) lie on the Extracellular side of the membrane. The helical transmembrane segment at 204–224 (FLAGLSVEPILVNSHLLMLEW) threads the bilayer. Residues 225 to 234 (TSPKFLTMMA) are Cytoplasmic-facing. Residues 235–255 (ALLSCAPNIGYMISAGLAFLF) traverse the membrane as a helical segment. Topologically, residues 256–258 (RIW) are extracellular. Residues 259–279 (HHLQLTMSVPIFFFLILTRWL) form a helical membrane-spanning segment. Over 280 to 348 (SESARWLIVT…LFHTSILRKR (69 aa)) the chain is Cytoplasmic. The helical transmembrane segment at 349–369 (ICVLSFMRLFFTVSIFGLAVH) threads the bilayer. Topologically, residues 370–376 (LQHLSSN) are extracellular. The chain crosses the membrane as a helical span at residues 377–397 (IILLQFLISALAILVSVIGPF). The Cytoplasmic portion of the chain corresponds to 398–405 (VLNHIGRR). Residues 406-426 (ITYLVLMSLRGIFILIAVFVP) form a helical membrane-spanning segment. At 427-432 (QEMQTL) the chain is on the extracellular side. Residues 433 to 453 (RIIMATLAEGISSLCVGVSRL) form a helical membrane-spanning segment. Residues 454–467 (HTNELLPTTLRATA) are Cytoplasmic-facing. The chain crosses the membrane as a helical span at residues 468–488 (VGVIGFFGNSGSFLSPLFMLL). Residues 489–494 (ATYYAN) lie on the Extracellular side of the membrane. Residues 495–515 (MPWIFYGGFSIFNAFTVFLLP) traverse the membrane as a helical segment. Topologically, residues 516–551 (ETKNQPLPDSTHDVGNDWKESRKGKKEDPIIKVTRF) are cytoplasmic. The disordered stretch occupies residues 523–551 (PDSTHDVGNDWKESRKGKKEDPIIKVTRF). Positions 525–545 (STHDVGNDWKESRKGKKEDPI) are enriched in basic and acidic residues.

The protein belongs to the major facilitator (TC 2.A.1) superfamily. Organic cation transporter (TC 2.A.1.19) family. Expressed in proximal kidney tubules, and in liver hepatocytes (at protein level).

Its subcellular location is the cell membrane. In terms of biological role, does not appear to have transporter activity. Its function is as follows. Sodium-independent organic anion transporter which exhibits high specificity for L-carnitine. Can also transport salicylic acid and the drug cimetidine. The sequence is that of Solute carrier family 22 member 27 from Mus musculus (Mouse).